The primary structure comprises 358 residues: MNASFAPSSSFVAGLRHDWSRAEIKALFELPFSDLMFQAQSVHRAWFNPNEVQVSTLCSIKTGACPEDCAYCPQSARYDTGLEKEKLMAVEKVIEEARAAKASGATRFCMGAAWRSPKGKDMPYVTAMVKGVKSLGMETCMTLGMLSEAQAQDLADAGLDYYNHNLDTSPEYYGEIITTRTYQDRLETLDNVRKAGMKVCCGGIVGMGEEVLDRAGLLQQLANMAEHPESVPINMLVKVGGTPLEREADLDPIDFIRTIAVARILMPKSHVRLSAGREQMNEQTQALAFLAGANSIFYGEKLLTTPNPEANKDMQLFNKLGIKPEAYDVHETEEEQEAALVHQLEEAKLDAFFYNAAR.

The Radical SAM core domain maps to 50 to 277; sequence NEVQVSTLCS…KSHVRLSAGR (228 aa). [4Fe-4S] cluster is bound by residues C65, C69, and C72. Positions 109, 140, 200, and 272 each coordinate [2Fe-2S] cluster.

Belongs to the radical SAM superfamily. Biotin synthase family. In terms of assembly, homodimer. It depends on [4Fe-4S] cluster as a cofactor. Requires [2Fe-2S] cluster as cofactor.

It carries out the reaction (4R,5S)-dethiobiotin + (sulfur carrier)-SH + 2 reduced [2Fe-2S]-[ferredoxin] + 2 S-adenosyl-L-methionine = (sulfur carrier)-H + biotin + 2 5'-deoxyadenosine + 2 L-methionine + 2 oxidized [2Fe-2S]-[ferredoxin]. Its pathway is cofactor biosynthesis; biotin biosynthesis; biotin from 7,8-diaminononanoate: step 2/2. Its function is as follows. Catalyzes the conversion of dethiobiotin (DTB) to biotin by the insertion of a sulfur atom into dethiobiotin via a radical-based mechanism. This Cellvibrio japonicus (strain Ueda107) (Pseudomonas fluorescens subsp. cellulosa) protein is Biotin synthase.